Here is a 233-residue protein sequence, read N- to C-terminus: Probable 2-phosphosulfolactate phosphatase (233 aa).

The protein belongs to the ComB family. Mg(2+) serves as cofactor.

It carries out the reaction (2R)-O-phospho-3-sulfolactate + H2O = (2R)-3-sulfolactate + phosphate. The chain is Probable 2-phosphosulfolactate phosphatase from Clostridium tetani (strain Massachusetts / E88).